A 363-amino-acid polypeptide reads, in one-letter code: 3-dehydroquinate synthase (363 aa).

Residues 134–135 (TT), K147, K156, and 174–177 (TLKT) each bind NAD(+). Positions 189, 254, and 271 each coordinate Zn(2+).

This sequence belongs to the sugar phosphate cyclases superfamily. Dehydroquinate synthase family. Requires Co(2+) as cofactor. The cofactor is Zn(2+). NAD(+) serves as cofactor.

The protein resides in the cytoplasm. The catalysed reaction is 7-phospho-2-dehydro-3-deoxy-D-arabino-heptonate = 3-dehydroquinate + phosphate. It participates in metabolic intermediate biosynthesis; chorismate biosynthesis; chorismate from D-erythrose 4-phosphate and phosphoenolpyruvate: step 2/7. In terms of biological role, catalyzes the conversion of 3-deoxy-D-arabino-heptulosonate 7-phosphate (DAHP) to dehydroquinate (DHQ). This is 3-dehydroquinate synthase from Prochlorococcus marinus (strain MIT 9515).